Consider the following 353-residue polypeptide: Deoxyhypusine synthase (353 aa).

NAD(+) contacts are provided by residues 90–94 (SNLIS), 116–118 (TAG), Glu122, and Asp228. 121-122 (EE) is a spermidine binding site. Spermidine is bound at residue Asp233. Gly275 provides a ligand contact to NAD(+). Spermidine is bound at residue His280. 300 to 301 (TA) contacts NAD(+). Spermidine-binding positions include 306 to 308 (GSD) and 315 to 321 (EAVSWGK). The active-site Nucleophile is Lys321. An NAD(+)-binding site is contributed by 334 to 335 (EA).

The protein belongs to the deoxyhypusine synthase family. Homotetramer. It depends on NAD(+) as a cofactor.

The catalysed reaction is [eIF5A protein]-L-lysine + spermidine = [eIF5A protein]-deoxyhypusine + propane-1,3-diamine. It functions in the pathway protein modification; eIF5A hypusination. Its function is as follows. Catalyzes the NAD-dependent oxidative cleavage of spermidine and the subsequent transfer of the butylamine moiety of spermidine to the epsilon-amino group of a specific lysine residue of the eIF-5A precursor protein to form the intermediate deoxyhypusine residue. The sequence is that of Deoxyhypusine synthase (dys-1) from Neurospora crassa (strain ATCC 24698 / 74-OR23-1A / CBS 708.71 / DSM 1257 / FGSC 987).